Here is a 368-residue protein sequence, read N- to C-terminus: Probable dual-specificity RNA methyltransferase RlmN (368 aa).

Glu100 serves as the catalytic Proton acceptor. A Radical SAM core domain is found at Gln106–Asp344. Cys113 and Cys349 are joined by a disulfide. The [4Fe-4S] cluster site is built by Cys120, Cys124, and Cys127. Residues Gly172–Glu173, Ser204, Ser227–His229, and Asn305 each bind S-adenosyl-L-methionine. The active-site S-methylcysteine intermediate is the Cys349.

It belongs to the radical SAM superfamily. RlmN family. It depends on [4Fe-4S] cluster as a cofactor.

The protein localises to the cytoplasm. It catalyses the reaction adenosine(2503) in 23S rRNA + 2 reduced [2Fe-2S]-[ferredoxin] + 2 S-adenosyl-L-methionine = 2-methyladenosine(2503) in 23S rRNA + 5'-deoxyadenosine + L-methionine + 2 oxidized [2Fe-2S]-[ferredoxin] + S-adenosyl-L-homocysteine. The catalysed reaction is adenosine(37) in tRNA + 2 reduced [2Fe-2S]-[ferredoxin] + 2 S-adenosyl-L-methionine = 2-methyladenosine(37) in tRNA + 5'-deoxyadenosine + L-methionine + 2 oxidized [2Fe-2S]-[ferredoxin] + S-adenosyl-L-homocysteine. Functionally, specifically methylates position 2 of adenine 2503 in 23S rRNA and position 2 of adenine 37 in tRNAs. This is Probable dual-specificity RNA methyltransferase RlmN from Streptococcus agalactiae serotype V (strain ATCC BAA-611 / 2603 V/R).